Here is a 190-residue protein sequence, read N- to C-terminus: T-cell receptor gamma chain C region 5/10-13 (190 aa).

Residues 1–157 form a c region region; the sequence is DKRTDSDFSP…LQVTTTYAFY (157 aa). Residues 158 to 178 form a helical membrane-spanning segment; sequence TYLILFFKSMVHLAFVVFCLF. Topologically, residues 179-190 are cytoplasmic; it reads RRAAMSCDDQRS.

The protein localises to the membrane. The chain is T-cell receptor gamma chain C region 5/10-13 from Mus musculus (Mouse).